The following is a 61-amino-acid chain: Small ribosomal subunit protein uS14 (61 aa).

Zn(2+) is bound by residues cysteine 24, cysteine 27, cysteine 40, and cysteine 43.

It belongs to the universal ribosomal protein uS14 family. Zinc-binding uS14 subfamily. In terms of assembly, part of the 30S ribosomal subunit. Contacts proteins S3 and S10. Requires Zn(2+) as cofactor.

Its function is as follows. Binds 16S rRNA, required for the assembly of 30S particles and may also be responsible for determining the conformation of the 16S rRNA at the A site. The protein is Small ribosomal subunit protein uS14 of Frankia casuarinae (strain DSM 45818 / CECT 9043 / HFP020203 / CcI3).